The following is a 549-amino-acid chain: Probable protein kinase UbiB (549 aa).

Residues 123–501 (DFNEIPLASA…QQQAHKSNYL (379 aa)) form the Protein kinase domain. Residues 129–137 (LASASISQV) and lysine 152 contribute to the ATP site. The Proton acceptor role is filled by aspartate 287. Transmembrane regions (helical) follow at residues 496–516 (HKSN…TLLI) and 520–540 (ATLW…FVGW).

It belongs to the ABC1 family. UbiB subfamily.

It localises to the cell inner membrane. Its pathway is cofactor biosynthesis; ubiquinone biosynthesis [regulation]. In terms of biological role, is probably a protein kinase regulator of UbiI activity which is involved in aerobic coenzyme Q (ubiquinone) biosynthesis. The protein is Probable protein kinase UbiB of Shewanella baltica (strain OS223).